Here is a 459-residue protein sequence, read N- to C-terminus: ATP synthase subunit beta (459 aa).

148–155 (GGAGVGKT) is a binding site for ATP.

It belongs to the ATPase alpha/beta chains family. In terms of assembly, F-type ATPases have 2 components, CF(1) - the catalytic core - and CF(0) - the membrane proton channel. CF(1) has five subunits: alpha(3), beta(3), gamma(1), delta(1), epsilon(1). CF(0) has three main subunits: a(1), b(2) and c(9-12). The alpha and beta chains form an alternating ring which encloses part of the gamma chain. CF(1) is attached to CF(0) by a central stalk formed by the gamma and epsilon chains, while a peripheral stalk is formed by the delta and b chains.

Its subcellular location is the cell inner membrane. The enzyme catalyses ATP + H2O + 4 H(+)(in) = ADP + phosphate + 5 H(+)(out). Produces ATP from ADP in the presence of a proton gradient across the membrane. The catalytic sites are hosted primarily by the beta subunits. The chain is ATP synthase subunit beta from Burkholderia mallei (strain NCTC 10229).